The primary structure comprises 573 residues: Probable D-xylulose kinase A (573 aa).

The substrate site is built by His-97, Arg-168, Asp-284, and Asn-285. ATP is bound by residues Trp-366, 471 to 472 (GG), and Asn-475.

The protein belongs to the FGGY kinase family.

The protein resides in the cytoplasm. The enzyme catalyses D-xylulose + ATP = D-xylulose 5-phosphate + ADP + H(+). In terms of biological role, highly specific D-xylulose kinase which participates in the catabolism of xylose. Xylose is a major component of hemicelluloses such as xylan. Most fungi utilize D-xylose via three enzymatic reactions, xylose reductase (XR), xylitol dehydrogenase (XDH), and xylulokinase, to form xylulose 5-phosphate, which enters pentose phosphate pathway. The chain is Probable D-xylulose kinase A (xkiA) from Aspergillus fumigatus (strain ATCC MYA-4609 / CBS 101355 / FGSC A1100 / Af293) (Neosartorya fumigata).